The sequence spans 172 residues: Myosin regulatory light chain 12B (172 aa).

The span at 1–16 shows a compositional bias: basic residues; it reads MSSKKAKTKTTKKRPQ. The disordered stretch occupies residues 1 to 20; the sequence is MSSKKAKTKTTKKRPQRATS. Thr19 is subject to Phosphothreonine; by MLCK and ZIPK/DAPK3. Ser20 carries the post-translational modification Phosphoserine; by MLCK and ZIPK/DAPK3. EF-hand domains lie at 29–64, 98–133, and 134–169; these read SQIQEFKEAFNMIDQNRDGFIDKEDLHDMLASLGKN, DPEDVIRNAFACFDEEATGTIQEDYLRELLTTMGDR, and FTDEEVDELYREAPIDKKGNFNYIEFTRILKHGAKD. Asp42, Asn44, Asp46, and Asp53 together coordinate Ca(2+).

Myosin is a hexamer of 2 heavy chains and 4 light chains: interacts with myosin heavy chain MYO19. Phosphorylation increases the actin-activated myosin ATPase activity and thereby regulates the contractile activity. It is required to generate the driving force in the migration of the cells but not necessary for localization of myosin-2 at the leading edge. Phosphorylation is reduced following epigallocatechin-3-O-gallate treatment. Ubiquitously expressed in various hematopoietic cells.

In terms of biological role, myosin regulatory subunit that plays an important role in regulation of both smooth muscle and nonmuscle cell contractile activity via its phosphorylation. Phosphorylation triggers actin polymerization in vascular smooth muscle. Implicated in cytokinesis, receptor capping, and cell locomotion. This Homo sapiens (Human) protein is Myosin regulatory light chain 12B (MYL12B).